The chain runs to 417 residues: Serine/threonine-protein kinase SBK1 (417 aa).

The region spanning 53–318 (YELVRELGKG…VFRFLKHELT (266 aa)) is the Protein kinase domain. ATP contacts are provided by residues 59–67 (LGKGTYGKV) and Lys82. Asp174 (proton acceptor) is an active-site residue. A disordered region spans residues 321–405 (LRRRPSHRAR…TDGRTDKSKG (85 aa)). The span at 363-382 (PSPPSVGPVVPVPVPVPVPV) shows a compositional bias: pro residues.

It belongs to the protein kinase superfamily. Ser/Thr protein kinase family.

The protein resides in the cytoplasm. It catalyses the reaction L-seryl-[protein] + ATP = O-phospho-L-seryl-[protein] + ADP + H(+). The catalysed reaction is L-threonyl-[protein] + ATP = O-phospho-L-threonyl-[protein] + ADP + H(+). Its function is as follows. May be involved in signal-transduction pathways related to the control of brain development. In Mus musculus (Mouse), this protein is Serine/threonine-protein kinase SBK1 (Sbk1).